Consider the following 625-residue polypeptide: Cytochrome c oxidase subunit 1 (625 aa).

A helical transmembrane segment spans residues 23–43; it reads IAIMYLIAGTLFFVKAGVMAL. H69 serves as a coordination point for Fe(II)-heme a. 6 helical membrane passes run 72 to 92, 99 to 119, 151 to 171, 195 to 215, 240 to 260, and 272 to 292; these read IMLFLAATPLLFAFMNYVIPL, VAFPFVNALGFWIFFFGGLLL, FYVLGLQVSGIGTLISAINFL, FISSTLILFAFTPLAAGLALL, IFWIFGHPEVYILVLPAFGII, and LFGYTAMVFATMIIAFLGFMV. Cu cation contacts are provided by H246 and Y250. Positions 246–250 form a cross-link, 1'-histidyl-3'-tyrosine (His-Tyr); the sequence is HPEVY. Residues H295 and H296 each contribute to the Cu cation site. Helical transmembrane passes span 309 to 329 and 343 to 363; these read IFAVATMTIAVPTGIKIFNWL and MLFASSFVPTFVLGGVTGVML. H381 contributes to the heme a3 binding site. A run of 5 helical transmembrane segments spans residues 382 to 402, 417 to 437, 460 to 480, 551 to 571, and 577 to 597; these read FHYIIVGGIVLSLFAGLFYWY, LFFWVFYIGFHLTFFVQHLLG, ISTIGTFFMSAGVILLVINVI, SILPFIMSIGLFFAGFGLIML, and IINPWIVAIGGLALTFGCMFV. Residue H383 participates in Fe(II)-heme a binding.

The protein belongs to the heme-copper respiratory oxidase family.

It localises to the cell membrane. The catalysed reaction is 4 Fe(II)-[cytochrome c] + O2 + 8 H(+)(in) = 4 Fe(III)-[cytochrome c] + 2 H2O + 4 H(+)(out). The protein operates within energy metabolism; oxidative phosphorylation. In terms of biological role, cytochrome c oxidase is the component of the respiratory chain that catalyzes the reduction of oxygen to water. Subunits 1-3 form the functional core of the enzyme complex. CO I is the catalytic subunit of the enzyme. Electrons originating in cytochrome c are transferred via the copper A center of subunit 2 and heme A of subunit 1 to the bimetallic center formed by heme A3 and copper B. This is Cytochrome c oxidase subunit 1 (ctaD) from Alkalihalophilus pseudofirmus (strain ATCC BAA-2126 / JCM 17055 / OF4) (Bacillus pseudofirmus).